Reading from the N-terminus, the 424-residue chain is Histidine--tRNA ligase (424 aa).

Belongs to the class-II aminoacyl-tRNA synthetase family. As to quaternary structure, homodimer.

It localises to the cytoplasm. It carries out the reaction tRNA(His) + L-histidine + ATP = L-histidyl-tRNA(His) + AMP + diphosphate + H(+). The sequence is that of Histidine--tRNA ligase from Yersinia pestis bv. Antiqua (strain Antiqua).